A 391-amino-acid polypeptide reads, in one-letter code: Cdc42 effector protein 1 (391 aa).

Ser-19 and Ser-27 each carry phosphoserine. A Phosphothreonine modification is found at Thr-34. The 15-residue stretch at 38–52 (ISHPLGDFRHTMHVG) folds into the CRIB domain. Position 39 is a phosphoserine (Ser-39). Residue Arg-53 is modified to Omega-N-methylarginine. Ser-65, Ser-73, Ser-77, Ser-101, Ser-113, Ser-121, and Ser-139 each carry phosphoserine. The disordered stretch occupies residues 163-189 (ISRLPRSEKPHDRDRDGSFPSEPGLRR). Basic and acidic residues predominate over residues 167 to 179 (PRSEKPHDRDRDG). A phosphoserine mark is found at Ser-180, Ser-190, Ser-192, and Ser-195. 8 tandem repeats follow at residues 220-226 (PAAETPA), 227-233 (PAANPPA), 234-240 (PTANPTG), 241-247 (PAANPPA), 248-254 (TTANPPA), 255-261 (PAANPSA), 262-268 (PAATPTG), and 269-275 (PAANPPA). The interval 220 to 275 (PAAETPAPAANPPAPTANPTGPAANPPATTANPPAPAANPSAPAATPTGPAANPPA) is 8 X 7 AA tandem repeats of [PT]-[AT]-A-[ENT]-[PT]-[PTS]-[AG]. The disordered stretch occupies residues 221–338 (AAETPAPAAN…HHYPEMDARQ (118 aa)). The segment covering 236-270 (ANPTGPAANPPATTANPPAPAANPSAPAATPTGPA) has biased composition (low complexity). A Phosphoserine modification is found at Ser-303. Basic and acidic residues predominate over residues 327-338 (GGHHYPEMDARQ). A phosphoserine mark is found at Ser-350 and Ser-353. The segment at 354-391 (LDEEWRAPQAGSRTPVPSTVQANTFEFADAEEDDEVKV) is disordered. The span at 364–377 (GSRTPVPSTVQANT) shows a compositional bias: polar residues. Positions 381 to 391 (ADAEEDDEVKV) are enriched in acidic residues.

The protein belongs to the BORG/CEP family. As to quaternary structure, interacts with RHOQ and CDC42, in a GTP-dependent manner. In terms of tissue distribution, endothelial and bone marrow stromal cells.

It localises to the endomembrane system. It is found in the cytoplasm. The protein localises to the cytoskeleton. In terms of biological role, probably involved in the organization of the actin cytoskeleton. Induced membrane extensions in fibroblasts. This chain is Cdc42 effector protein 1 (CDC42EP1), found in Homo sapiens (Human).